A 293-amino-acid polypeptide reads, in one-letter code: Phosphatidylglycerol--prolipoprotein diacylglyceryl transferase (293 aa).

Helical transmembrane passes span 4-24, 45-65, 81-101, and 115-135; these read ILAF…LFIF, FELR…YFVA, ELIF…YVLF, and IWEG…TGFL. Arginine 165 is a binding site for a 1,2-diacyl-sn-glycero-3-phospho-(1'-sn-glycerol). Helical transmembrane passes span 204 to 224, 231 to 249, and 262 to 282; these read PTFL…SVYF, HGEV…RIVI, and IKAA…GFLI.

It belongs to the Lgt family.

It localises to the cell inner membrane. The enzyme catalyses L-cysteinyl-[prolipoprotein] + a 1,2-diacyl-sn-glycero-3-phospho-(1'-sn-glycerol) = an S-1,2-diacyl-sn-glyceryl-L-cysteinyl-[prolipoprotein] + sn-glycerol 1-phosphate + H(+). It functions in the pathway protein modification; lipoprotein biosynthesis (diacylglyceryl transfer). In terms of biological role, catalyzes the transfer of the diacylglyceryl group from phosphatidylglycerol to the sulfhydryl group of the N-terminal cysteine of a prolipoprotein, the first step in the formation of mature lipoproteins. This is Phosphatidylglycerol--prolipoprotein diacylglyceryl transferase from Thermotoga petrophila (strain ATCC BAA-488 / DSM 13995 / JCM 10881 / RKU-1).